We begin with the raw amino-acid sequence, 257 residues long: Tryptophan synthase alpha chain (257 aa).

Residues glutamate 44 and aspartate 55 each act as proton acceptor in the active site.

The protein belongs to the TrpA family. Tetramer of two alpha and two beta chains.

The enzyme catalyses (1S,2R)-1-C-(indol-3-yl)glycerol 3-phosphate + L-serine = D-glyceraldehyde 3-phosphate + L-tryptophan + H2O. It participates in amino-acid biosynthesis; L-tryptophan biosynthesis; L-tryptophan from chorismate: step 5/5. In terms of biological role, the alpha subunit is responsible for the aldol cleavage of indoleglycerol phosphate to indole and glyceraldehyde 3-phosphate. This Chlamydia felis (strain Fe/C-56) (Chlamydophila felis) protein is Tryptophan synthase alpha chain.